Here is a 435-residue protein sequence, read N- to C-terminus: GPI-anchor transamidase component PIGU (435 aa).

Topologically, residues 1–3 (MAA) are cytoplasmic. A helical transmembrane segment spans residues 4–22 (PLALVLVVAVTVRAALFRS). Residues 23-78 (SLAEFISERVEVVSPLSSWKRVVEGLSLLDLGVSPYSGAVFHETPLIIYLFHFLID) lie on the Lumenal side of the membrane. The helical transmembrane segment at 79–99 (YAELVFMITDALTAIALYFAI) threads the bilayer. The Cytoplasmic segment spans residues 100-136 (QDFNKVVFKKQKLLLELDQYAPDVAELIRTPMEMRYI). A run of 4 helical transmembrane segments spans residues 137–158 (PLKV…VAKS), 159–178 (TCAI…IKGS), 179–194 (VFLS…YQTL), and 195–205 (YPVTLFAPGLL). Residues 206–222 (YLLQRQYIPVKVKSKAF) are Cytoplasmic-facing. Lys216 lines the a cardiolipin pocket. The chain crosses the membrane as a helical span at residues 223–244 (WIFSWEYAMMYIGSLVVIVCLS). Residues 245 to 286 (FFLLSSWDFIPAVYGFILSVPDLTPNIGLFWYFFAEMFEHFS) lie on the Lumenal side of the membrane. A helical transmembrane segment spans residues 287–306 (LFFVCVFQINVFFYTVPLAI). At 307 to 311 (KLKEH) the chain is on the cytoplasmic side. Position 309 (Lys309) interacts with a cardiolipin. 2 helical membrane-spanning segments follow: residues 312–331 (PIFF…SYPT) and 332–345 (VGDV…FPVW). Residues 346–354 (NHLYRFLRN) are Cytoplasmic-facing. The helical transmembrane segment at 355 to 372 (VFVLTCIIVVCSLLFPVL) threads the bilayer. The Lumenal segment spans residues 373–384 (WHLWIYAGSANS). Asn383 and Asn385 together coordinate a 2-acyl-6-[6-phosphoethanolamine-alpha-D-mannosyl-(1-&gt;2)-6-phosphoethanolamine-alpha-D-mannosyl-(1-&gt;6)-2-phosphoethanolamine-alpha-D-mannosyl-(1-&gt;4)-alpha-D-glucosaminyl]-1-(1-radyl,2-acyl-sn-glycero-3-phospho)-1D-myo-inositol. The helical transmembrane segment at 385–406 (NFFYAITLTFNVGQILLISDYF) threads the bilayer. At 407–435 (YAFLRREYYLTHGLYLTAKDGTEAMLVLK) the chain is on the cytoplasmic side.

It belongs to the PIGU family. As to quaternary structure, heteropentamer. Part of the GPI-anchor transamidase complex, consisting of PIGK, PIGT, PIGS, PIGU and GAA1.

Its subcellular location is the endoplasmic reticulum membrane. It participates in glycolipid biosynthesis; glycosylphosphatidylinositol-anchor biosynthesis. Component of the glycosylphosphatidylinositol-anchor (GPI-anchor) transamidase (GPI-T) complex that catalyzes the formation of the linkage between a proprotein and a GPI-anchor and participates in GPI anchored protein biosynthesis. Binds the lipid portion of GPI-anchor. May act as an organizer in the transmembrane layer to recruit other subunits, and thus is essential for assembly of the complex. This chain is GPI-anchor transamidase component PIGU, found in Cricetulus griseus (Chinese hamster).